A 94-amino-acid polypeptide reads, in one-letter code: Neutrophil defensin 1 (94 aa).

Positions 1–19 (MRTLAILAAILLVALQAQA) are cleaved as a signal peptide. A propeptide spanning residues 20–64 (EPLQARADEVAAAPEQIPADNPEVVVSLAWDESLAPKHPGSRKNV) is cleaved from the precursor. Cystine bridges form between Cys66-Cys94, Cys68-Cys83, and Cys73-Cys93. Position 78 is an ADP-ribosylarginine; by ART1 (Arg78). Position 85 is a phosphotyrosine (Tyr85). Residue Arg88 is modified to ADP-ribosylarginine; by ART1.

This sequence belongs to the alpha-defensin family. In terms of assembly, tetramer. Dimer. Interacts with RETN. ADP-ribosylation drastically reduces cytotoxic and antibacterial activities, and enhances IL8 production.

The protein localises to the secreted. In terms of biological role, effector molecule of the innate immune system that acts via antibiotic-like properties against a broad array of infectious agents including bacteria, fungi, and viruses or by promoting the activation and maturation of some APCs. Interacts with the essential precursor of cell wall synthesis lipid II to inhibit bacterial cell wall synthesis. Inhibits adenovirus infection via inhibition of viral disassembly at the vertex region, thereby restricting the release of internal capsid protein pVI, which is required for endosomal membrane penetration during cell entry. In addition, interaction with adenovirus capsid leads to the redirection of viral particles to TLR4 thereby promoting a NLRP3-mediated inflammasome response and interleukin 1-beta (IL-1beta) release. Induces the production of proinflammatory cytokines including type I interferon (IFN) in plasmacytoid dendritic cells (pDCs) by triggering the degradation of NFKBIA and nuclear translocation of IRF1, both of which are required for activation of pDCs. The polypeptide is Neutrophil defensin 1 (DEFA1) (Pan troglodytes (Chimpanzee)).